The primary structure comprises 136 residues: Small ribosomal subunit protein uS19 (136 aa).

Positions 114-136 (RSRVSHGSAGVGATRSSKFVPLK) are disordered.

Belongs to the universal ribosomal protein uS19 family.

Functionally, protein S19 forms a complex with S13 that binds strongly to the 16S ribosomal RNA. This is Small ribosomal subunit protein uS19 from Methanosarcina barkeri (strain Fusaro / DSM 804).